The following is a 446-amino-acid chain: Kynurenine 3-monooxygenase (446 aa).

This sequence belongs to the aromatic-ring hydroxylase family. KMO subfamily. FAD is required as a cofactor.

It catalyses the reaction L-kynurenine + NADPH + O2 + H(+) = 3-hydroxy-L-kynurenine + NADP(+) + H2O. The protein operates within cofactor biosynthesis; NAD(+) biosynthesis; quinolinate from L-kynurenine: step 1/3. In terms of biological role, catalyzes the hydroxylation of L-kynurenine (L-Kyn) to form 3-hydroxy-L-kynurenine (L-3OHKyn). Required for synthesis of quinolinic acid. The sequence is that of Kynurenine 3-monooxygenase from Flavobacterium johnsoniae (strain ATCC 17061 / DSM 2064 / JCM 8514 / BCRC 14874 / CCUG 350202 / NBRC 14942 / NCIMB 11054 / UW101) (Cytophaga johnsonae).